Here is a 109-residue protein sequence, read N- to C-terminus: Tektin-3 (109 aa).

It belongs to the tektin family. In terms of assembly, microtubule inner protein component of sperm flagellar doublet microtubules. Interacts with TEKT1, TEKT2, TEKT4 and TEKT5. Interacts with CCDC38. In terms of processing, N- and O-glycosylated. May be proteolytically processed during the epididymal transit of spermatozoa. Post-translationally, ubiquitinated, leading to its degradation. Deubiquitinated by USP16, promoting its stability.

It localises to the cytoplasm. The protein localises to the cytoskeleton. The protein resides in the cilium axoneme. It is found in the flagellum axoneme. Its subcellular location is the cytoplasmic vesicle. It localises to the secretory vesicle. The protein localises to the acrosome outer membrane. Its function is as follows. Microtubule inner protein (MIP) part of the dynein-decorated doublet microtubules (DMTs) in cilia and flagellar axoneme. Forms filamentous polymers in the walls of ciliary and flagellar microtubules. Required for normal sperm mobility. The chain is Tektin-3 from Mesocricetus auratus (Golden hamster).